The sequence spans 610 residues: Elongation factor 4 (610 aa).

A tr-type G domain is found at 15–197; it reads KSIRNFSIIA…RIINDIPYPK (183 aa). GTP contacts are provided by residues 27 to 32 and 144 to 147; these read DHGKST and NKID.

It belongs to the TRAFAC class translation factor GTPase superfamily. Classic translation factor GTPase family. LepA subfamily.

The protein resides in the cell membrane. The enzyme catalyses GTP + H2O = GDP + phosphate + H(+). In terms of biological role, required for accurate and efficient protein synthesis under certain stress conditions. May act as a fidelity factor of the translation reaction, by catalyzing a one-codon backward translocation of tRNAs on improperly translocated ribosomes. Back-translocation proceeds from a post-translocation (POST) complex to a pre-translocation (PRE) complex, thus giving elongation factor G a second chance to translocate the tRNAs correctly. Binds to ribosomes in a GTP-dependent manner. The protein is Elongation factor 4 of Buchnera aphidicola subsp. Acyrthosiphon pisum (strain APS) (Acyrthosiphon pisum symbiotic bacterium).